A 426-amino-acid chain; its full sequence is Enolase (426 aa).

Glutamine 163 is a (2R)-2-phosphoglycerate binding site. Glutamate 205 functions as the Proton donor in the catalytic mechanism. The Mg(2+) site is built by aspartate 242, glutamate 285, and aspartate 312. (2R)-2-phosphoglycerate is bound by residues lysine 337, arginine 366, serine 367, and lysine 388. Catalysis depends on lysine 337, which acts as the Proton acceptor.

This sequence belongs to the enolase family. It depends on Mg(2+) as a cofactor.

Its subcellular location is the cytoplasm. The protein localises to the secreted. It is found in the cell surface. It catalyses the reaction (2R)-2-phosphoglycerate = phosphoenolpyruvate + H2O. It functions in the pathway carbohydrate degradation; glycolysis; pyruvate from D-glyceraldehyde 3-phosphate: step 4/5. Catalyzes the reversible conversion of 2-phosphoglycerate (2-PG) into phosphoenolpyruvate (PEP). It is essential for the degradation of carbohydrates via glycolysis. In Phenylobacterium zucineum (strain HLK1), this protein is Enolase.